Reading from the N-terminus, the 388-residue chain is Staphopain A (388 aa).

An N-terminal signal peptide occupies residues 1–25; it reads MKRNFPKLIALSLIFSLSITPIANA. Residues 26–214 constitute a propeptide that is removed on maturation; sequence ESNSNIKAKD…TSQFKSNNYT (189 aa). Residues Cys-238, His-334, and Asn-355 contribute to the active site.

It belongs to the peptidase C47 family. In the cytoplasm, prematurely activated/folded ScpA forms a stable non-covalent complex with ScpB. Post-translationally, cleavage leads to the activation of ScpA probably by an auto-catalytic manner.

It is found in the secreted. It catalyses the reaction Broad endopeptidase action on proteins including elastin, but rather limited hydrolysis of small-molecule substrates. Assays are conveniently made with hemoglobin, casein or Z-Phe-Arg-NHMec as substrate.. Prematurely activated/folded staphopain A is inhibited by staphostatin A (ScpB), which is probably required to protect staphylococcal cytoplasmic proteins from degradation by ScpA. Also inactivated by heavy metal ions such as Hg(2+) or Ag(+), iodoacetamide, E-64 and human plasma. In terms of biological role, cysteine protease that plays an important role in the inhibition of host innate immune response. Cleaves host elastins found in connective tissues, pulmonary surfactant protein A in the lungs, and the chemokine receptor CXCR2 on leukocytes. Proteolytic cleavage of surfactant protein A impairs bacterial phagocytosis by neutrophils while CXCR2 degradation blocks neutrophil activation and chemotaxis. Additionally, promotes vascular leakage by activating the plasma kallikerin/kinin system, resulting in hypotension. This chain is Staphopain A (sspP), found in Staphylococcus aureus.